Reading from the N-terminus, the 175-residue chain is Peptide deformylase (175 aa).

Residues C94 and H136 each contribute to the Fe cation site. E137 is a catalytic residue. Residue H140 coordinates Fe cation.

Belongs to the polypeptide deformylase family. Requires Fe(2+) as cofactor.

The enzyme catalyses N-terminal N-formyl-L-methionyl-[peptide] + H2O = N-terminal L-methionyl-[peptide] + formate. Its function is as follows. Removes the formyl group from the N-terminal Met of newly synthesized proteins. Requires at least a dipeptide for an efficient rate of reaction. N-terminal L-methionine is a prerequisite for activity but the enzyme has broad specificity at other positions. The protein is Peptide deformylase of Brucella suis biovar 1 (strain 1330).